We begin with the raw amino-acid sequence, 599 residues long: UvrABC system protein C (599 aa).

The 79-residue stretch at 13-91 (NLPGVYRMIN…IKGFMPRYNV (79 aa)) folds into the GIY-YIG domain. In terms of domain architecture, UVR spans 200–235 (QQVMDELGEKMNEAAEKMEYELAAVYRDRIQSLRQV).

This sequence belongs to the UvrC family. In terms of assembly, interacts with UvrB in an incision complex.

It is found in the cytoplasm. The UvrABC repair system catalyzes the recognition and processing of DNA lesions. UvrC both incises the 5' and 3' sides of the lesion. The N-terminal half is responsible for the 3' incision and the C-terminal half is responsible for the 5' incision. The chain is UvrABC system protein C from Methylobacillus flagellatus (strain ATCC 51484 / DSM 6875 / VKM B-1610 / KT).